The following is a 548-amino-acid chain: Luciferin 4-monooxygenase (548 aa).

The short motif at 546–548 (AKM) is the Microbody targeting signal element.

This sequence belongs to the ATP-dependent AMP-binding enzyme family. In terms of assembly, homodimer. The cofactor is Mg(2+).

It localises to the peroxisome. It carries out the reaction firefly D-luciferin + ATP + O2 = firefly oxyluciferin + hnu + AMP + CO2 + diphosphate. With respect to regulation, inhibited by ATP analogs and sodium deoxycholate. Activated by choline-containing phospholipids. Produces green light with a wavelength of 570 nm. The chain is Luciferin 4-monooxygenase from Luciola mingrelica (Southern Russian firefly).